We begin with the raw amino-acid sequence, 294 residues long: tRNA dimethylallyltransferase (294 aa).

9–16 contacts ATP; the sequence is GPTASGKS. A substrate-binding site is contributed by 11–16; it reads TASGKS. Residues 155-159 are interaction with substrate tRNA; it reads QRVIR.

It belongs to the IPP transferase family. In terms of assembly, monomer. It depends on Mg(2+) as a cofactor.

The enzyme catalyses adenosine(37) in tRNA + dimethylallyl diphosphate = N(6)-dimethylallyladenosine(37) in tRNA + diphosphate. Functionally, catalyzes the transfer of a dimethylallyl group onto the adenine at position 37 in tRNAs that read codons beginning with uridine, leading to the formation of N6-(dimethylallyl)adenosine (i(6)A). The sequence is that of tRNA dimethylallyltransferase from Leuconostoc citreum (strain KM20).